Consider the following 168-residue polypeptide: Profilin-3 (168 aa).

The disordered stretch occupies residues 14-36; the sequence is LSLEHSDKPQRRSRAKVKKKKKT. Over residues 24–36 the composition is skewed to basic residues; that stretch reads RRSRAKVKKKKKT.

It belongs to the profilin family. As to quaternary structure, occurs in many kinds of cells as a complex with monomeric actin in a 1:1 ratio. Binding to the poly-proline motif of formins induces formation of oligomers through the N-terminal hydrophobic residues of PRF3. In terms of tissue distribution, expressed in roots, rosette leaves, cauline leaves, stems and flowers.

It is found in the cytoplasm. The protein resides in the cytoskeleton. Functionally, binds to actin monomers and regulates the organization of the actin cytoskeleton. Can increase the critical concentration (Cc) of actin assembly in vitro. Acts as a downstream effector of the hydrogen sulfide signaling to regulate the assembly and depolymerization of F-actin. At high concentrations, profilin prevents the polymerization of actin, whereas it enhances it at low concentrations. Binding to the poly-proline motif of formin induces oligomerization of PRF3. PRF3 oligomers inhibit formin-mediated actin assembly to modulate plant immunity triggered by pathogen-associated molecular patterns (PAMPs). This is Profilin-3 from Arabidopsis thaliana (Mouse-ear cress).